The chain runs to 338 residues: Glycerol-3-phosphate dehydrogenase [NAD(P)+] (338 aa).

5 residues coordinate NADPH: Ser-11, Trp-12, His-32, Arg-33, and Lys-106. 3 residues coordinate sn-glycerol 3-phosphate: Lys-106, Gly-137, and Ser-139. Ala-141 lines the NADPH pocket. Residues Lys-192, Asp-245, Ser-255, Arg-256, and Asn-257 each coordinate sn-glycerol 3-phosphate. Catalysis depends on Lys-192, which acts as the Proton acceptor. Arg-256 lines the NADPH pocket. Residues Val-280 and Glu-282 each contribute to the NADPH site.

Belongs to the NAD-dependent glycerol-3-phosphate dehydrogenase family.

The protein resides in the cytoplasm. The catalysed reaction is sn-glycerol 3-phosphate + NAD(+) = dihydroxyacetone phosphate + NADH + H(+). The enzyme catalyses sn-glycerol 3-phosphate + NADP(+) = dihydroxyacetone phosphate + NADPH + H(+). Its pathway is membrane lipid metabolism; glycerophospholipid metabolism. In terms of biological role, catalyzes the reduction of the glycolytic intermediate dihydroxyacetone phosphate (DHAP) to sn-glycerol 3-phosphate (G3P), the key precursor for phospholipid synthesis. The protein is Glycerol-3-phosphate dehydrogenase [NAD(P)+] of Lysinibacillus sphaericus (strain C3-41).